The following is a 564-amino-acid chain: Septation ring formation regulator EzrA (564 aa).

Topologically, residues 1 to 4 are extracellular; sequence MVLF. Residues 5-23 form a helical membrane-spanning segment; that stretch reads IILAILVVILIAIGVLFYM. The Cytoplasmic portion of the chain corresponds to 24–564; the sequence is RSNKRNLIEK…KHIEEQVIKE (541 aa). 4 coiled-coil regions span residues 84–126, 165–223, 271–303, and 350–435; these read VEEK…HQVT, EAAE…LIRE, MISRLELDEANNKLENINDKLDEMYDLIEYEVK, and VRQF…RRLL.

It belongs to the EzrA family.

It localises to the cell membrane. Functionally, negative regulator of FtsZ ring formation; modulates the frequency and position of FtsZ ring formation. Inhibits FtsZ ring formation at polar sites. Interacts either with FtsZ or with one of its binding partners to promote depolymerization. This is Septation ring formation regulator EzrA from Staphylococcus epidermidis (strain ATCC 12228 / FDA PCI 1200).